The following is an 828-amino-acid chain: Periplasmic nitrate reductase (828 aa).

A signal peptide (tat-type signal) is located at residues 1–31 (MKLSRRSFMKANAVAAAAAAAGLSVPGVARA). The region spanning 39 to 95 (IKWDKAPCRFCGTGCGVLVGTQQGRVVACQGDPDAPVNRGLNCIKGYFLPKIMYGKD) is the 4Fe-4S Mo/W bis-MGD-type domain. Residues Cys-46, Cys-49, Cys-53, and Cys-81 each contribute to the [4Fe-4S] cluster site. Mo-bis(molybdopterin guanine dinucleotide) contacts are provided by residues Lys-83, Gln-150, Asn-175, Cys-179, 212-219 (WGANMAEM), 243-247 (STYQH), 262-264 (QSD), Met-372, Gln-376, Asn-482, 508-509 (SD), Lys-531, Asp-558, and 718-727 (TGRVLEHWHT). Phe-794 lines the substrate pocket. The Mo-bis(molybdopterin guanine dinucleotide) site is built by Asn-802 and Lys-819.

The protein belongs to the prokaryotic molybdopterin-containing oxidoreductase family. NasA/NapA/NarB subfamily. In terms of assembly, component of the periplasmic nitrate reductase NapAB complex composed of NapA and NapB. The cofactor is [4Fe-4S] cluster. Requires Mo-bis(molybdopterin guanine dinucleotide) as cofactor. In terms of processing, predicted to be exported by the Tat system. The position of the signal peptide cleavage has not been experimentally proven.

Its subcellular location is the periplasm. It catalyses the reaction 2 Fe(II)-[cytochrome] + nitrate + 2 H(+) = 2 Fe(III)-[cytochrome] + nitrite + H2O. In terms of biological role, catalytic subunit of the periplasmic nitrate reductase complex NapAB. Receives electrons from NapB and catalyzes the reduction of nitrate to nitrite. In Shigella flexneri serotype 5b (strain 8401), this protein is Periplasmic nitrate reductase.